The primary structure comprises 229 residues: Uracil-DNA glycosylase (229 aa).

Aspartate 65 functions as the Proton acceptor in the catalytic mechanism.

This sequence belongs to the uracil-DNA glycosylase (UDG) superfamily. UNG family.

It is found in the cytoplasm. It catalyses the reaction Hydrolyzes single-stranded DNA or mismatched double-stranded DNA and polynucleotides, releasing free uracil.. Its function is as follows. Excises uracil residues from the DNA which can arise as a result of misincorporation of dUMP residues by DNA polymerase or due to deamination of cytosine. The sequence is that of Uracil-DNA glycosylase from Brevibacillus brevis (strain 47 / JCM 6285 / NBRC 100599).